Reading from the N-terminus, the 314-residue chain is tRNA uridine(34) hydroxylase (314 aa).

In terms of domain architecture, Rhodanese spans 135–229; sequence SDPDTIVIDT…YLEEVPEEES (95 aa). Cys189 (cysteine persulfide intermediate) is an active-site residue.

This sequence belongs to the TrhO family.

The enzyme catalyses uridine(34) in tRNA + AH2 + O2 = 5-hydroxyuridine(34) in tRNA + A + H2O. Catalyzes oxygen-dependent 5-hydroxyuridine (ho5U) modification at position 34 in tRNAs. The polypeptide is tRNA uridine(34) hydroxylase (Agrobacterium fabrum (strain C58 / ATCC 33970) (Agrobacterium tumefaciens (strain C58))).